The chain runs to 329 residues: NADH-quinone oxidoreductase subunit H (329 aa).

9 helical membrane-spanning segments follow: residues 9-29 (LIKI…ATYI), 42-62 (GPCY…IKLF), 75-95 (FIFT…MAPI), 117-137 (IGFL…ILAG), 154-174 (IQLL…LMVV), 188-208 (GGFL…FLIA), 238-258 (LKWG…SFVI), 269-291 (WGFI…LSMW), and 309-329 (WKIM…IILI).

It belongs to the complex I subunit 1 family. NDH-1 is composed of 14 different subunits. Subunits NuoA, H, J, K, L, M, N constitute the membrane sector of the complex.

It is found in the cell inner membrane. The enzyme catalyses a quinone + NADH + 5 H(+)(in) = a quinol + NAD(+) + 4 H(+)(out). NDH-1 shuttles electrons from NADH, via FMN and iron-sulfur (Fe-S) centers, to quinones in the respiratory chain. The immediate electron acceptor for the enzyme in this species is believed to be ubiquinone. Couples the redox reaction to proton translocation (for every two electrons transferred, four hydrogen ions are translocated across the cytoplasmic membrane), and thus conserves the redox energy in a proton gradient. This subunit may bind ubiquinone. The protein is NADH-quinone oxidoreductase subunit H of Helicobacter pylori (strain HPAG1).